Here is a 99-residue protein sequence, read N- to C-terminus: Putative GIY-YIG domain-containing protein 242L (99 aa).

The region spanning 5-81 is the GIY-YIG domain; that stretch reads NGWNIYMVTM…KKQTKKVKLQ (77 aa).

This is Putative GIY-YIG domain-containing protein 242L from Invertebrate iridescent virus 6 (IIV-6).